We begin with the raw amino-acid sequence, 330 residues long: Peptide transport system ATP-binding protein SapD (330 aa).

The region spanning 6-259 (IRNLTIEFKT…PHHPYTQALI (254 aa)) is the ABC transporter domain. ATP is bound at residue 40–47 (GESGSGKS).

Belongs to the ABC transporter superfamily.

The protein localises to the cell inner membrane. Functionally, involved in a peptide intake transport system that plays a role in the resistance to antimicrobial peptides. The protein is Peptide transport system ATP-binding protein SapD (sapD) of Escherichia coli O157:H7.